The chain runs to 332 residues: Cysteine and histidine-rich domain-containing protein 1 (332 aa).

At Ala2 the chain carries N-acetylalanine. An interaction with PPP5C region spans residues 2 to 77 (ALLCYNRGCG…KPPESVKPEV (76 aa)). Zn(2+) is bound by residues Cys5, Cys10, Cys24, His27, Cys42, and Cys43. 2 CHORD domains span residues 5–64 (CYNR…KGRH) and 157–216 (CKNG…KGKH). The residue at position 47 (Thr47) is a Phosphothreonine. Phosphoserine is present on Ser51. Positions 59, 64, 157, 162, 176, 179, 194, 195, 211, and 216 each coordinate Zn(2+). The disordered stretch occupies residues 62–81 (GRHNSEKPPESVKPEVKTTE). A compositionally biased stretch (basic and acidic residues) spans 64 to 81 (HNSEKPPESVKPEVKTTE). The tract at residues 65–316 (NSEKPPESVK…AEPMQWASLE (252 aa)) is interaction with HSP90AA1 and HSP90AB1. Residues 227–316 (VVPCRHDWHQ…AEPMQWASLE (90 aa)) enclose the CS domain.

Interacts with HSP90AA1, HSP90AB1, PPP5C, ROCK1 and ROCK2.

Functionally, regulates centrosome duplication, probably by inhibiting the kinase activity of ROCK2. Proposed to act as co-chaperone for HSP90. May play a role in the regulation of NOD1 via a HSP90 chaperone complex. In vitro, has intrinsic chaperone activity. This function may be achieved by inhibiting association of ROCK2 with NPM1. Plays a role in ensuring the localization of the tyrosine kinase receptor EGFR to the plasma membrane, and thus ensures the subsequent regulation of EGFR activity and EGF-induced actin cytoskeleton remodeling. Involved in stress response. Prevents tumorigenesis. This is Cysteine and histidine-rich domain-containing protein 1 (CHORDC1) from Pongo abelii (Sumatran orangutan).